The sequence spans 136 residues: Large ribosomal subunit protein bL21 (136 aa).

Residues 1–21 (MSETPSKAKASKPAESKAQAS) show a composition bias toward low complexity. A disordered region spans residues 1-25 (MSETPSKAKASKPAESKAQASDSSG).

This sequence belongs to the bacterial ribosomal protein bL21 family. As to quaternary structure, part of the 50S ribosomal subunit. Contacts protein L20.

This protein binds to 23S rRNA in the presence of protein L20. The polypeptide is Large ribosomal subunit protein bL21 (Synechococcus sp. (strain RCC307)).